We begin with the raw amino-acid sequence, 324 residues long: Ribose-phosphate pyrophosphokinase 1 (324 aa).

ATP contacts are provided by residues D39–E41 and R98–Q99. 2 residues coordinate Mg(2+): H132 and D174. Residue K197 is part of the active site. D-ribose 5-phosphate contacts are provided by residues R199, D223, and D227–T231.

The protein belongs to the ribose-phosphate pyrophosphokinase family. Class I subfamily. In terms of assembly, homohexamer. Mg(2+) serves as cofactor.

Its subcellular location is the cytoplasm. The enzyme catalyses D-ribose 5-phosphate + ATP = 5-phospho-alpha-D-ribose 1-diphosphate + AMP + H(+). It participates in metabolic intermediate biosynthesis; 5-phospho-alpha-D-ribose 1-diphosphate biosynthesis; 5-phospho-alpha-D-ribose 1-diphosphate from D-ribose 5-phosphate (route I): step 1/1. In terms of biological role, involved in the biosynthesis of the central metabolite phospho-alpha-D-ribosyl-1-pyrophosphate (PRPP) via the transfer of pyrophosphoryl group from ATP to 1-hydroxyl of ribose-5-phosphate (Rib-5-P). This is Ribose-phosphate pyrophosphokinase 1 from Lactococcus lactis subsp. lactis (strain IL1403) (Streptococcus lactis).